Reading from the N-terminus, the 417-residue chain is NADH-quinone oxidoreductase subunit D (417 aa).

The protein belongs to the complex I 49 kDa subunit family. As to quaternary structure, NDH-1 is composed of 14 different subunits. Subunits NuoB, C, D, E, F, and G constitute the peripheral sector of the complex.

It localises to the cell inner membrane. The catalysed reaction is a quinone + NADH + 5 H(+)(in) = a quinol + NAD(+) + 4 H(+)(out). Functionally, NDH-1 shuttles electrons from NADH, via FMN and iron-sulfur (Fe-S) centers, to quinones in the respiratory chain. The immediate electron acceptor for the enzyme in this species is believed to be ubiquinone. Couples the redox reaction to proton translocation (for every two electrons transferred, four hydrogen ions are translocated across the cytoplasmic membrane), and thus conserves the redox energy in a proton gradient. The sequence is that of NADH-quinone oxidoreductase subunit D from Leptothrix cholodnii (strain ATCC 51168 / LMG 8142 / SP-6) (Leptothrix discophora (strain SP-6)).